Here is a 151-residue protein sequence, read N- to C-terminus: D-aminoacyl-tRNA deacylase (151 aa).

Residues 136–137 (GP) carry the Gly-cisPro motif, important for rejection of L-amino acids motif.

This sequence belongs to the DTD family. Homodimer.

It localises to the cytoplasm. It catalyses the reaction glycyl-tRNA(Ala) + H2O = tRNA(Ala) + glycine + H(+). The enzyme catalyses a D-aminoacyl-tRNA + H2O = a tRNA + a D-alpha-amino acid + H(+). An aminoacyl-tRNA editing enzyme that deacylates mischarged D-aminoacyl-tRNAs. Also deacylates mischarged glycyl-tRNA(Ala), protecting cells against glycine mischarging by AlaRS. Acts via tRNA-based rather than protein-based catalysis; rejects L-amino acids rather than detecting D-amino acids in the active site. By recycling D-aminoacyl-tRNA to D-amino acids and free tRNA molecules, this enzyme counteracts the toxicity associated with the formation of D-aminoacyl-tRNA entities in vivo and helps enforce protein L-homochirality. This is D-aminoacyl-tRNA deacylase from Lactococcus lactis subsp. cremoris (strain SK11).